The primary structure comprises 181 residues: Adenylyl-sulfate kinase (181 aa).

Gly20 to Ser27 serves as a coordination point for ATP. Ser94 functions as the Phosphoserine intermediate in the catalytic mechanism.

It belongs to the APS kinase family.

The enzyme catalyses adenosine 5'-phosphosulfate + ATP = 3'-phosphoadenylyl sulfate + ADP + H(+). It functions in the pathway sulfur metabolism; hydrogen sulfide biosynthesis; sulfite from sulfate: step 2/3. Its function is as follows. Catalyzes the synthesis of activated sulfate. The polypeptide is Adenylyl-sulfate kinase (Deinococcus deserti (strain DSM 17065 / CIP 109153 / LMG 22923 / VCD115)).